The primary structure comprises 546 residues: MDPKAGGGGEEDDCVDSGAETGGSDYSHLSSTSSELSVEEAQDPFLVSIHIIADPGESQPLQEAIDNVLAWIHPDLPLFRVSERRASRRRRKPPKGAQPALAVVLFLQEEYGEEQILQLHRTLQQPPWRHHHTEQVHGRFLPYLPCSQDFFTLAPGTPLWAIRPVHYGKEIVRFTVYCRYDNYADSLRFYQLILRRSPSQKKADFCIFPIFSNLDVDIQFSLKRLPCDQCPVPTDSSVLEFRVRDIGELVPLLPNPCSPISEGRWQTEDHDGNKILLQAQRVHKKFPKPGRVHHASEKKRHSTPLPSTAVPSHTPGSSQQSPLNSPHPGPIRTGLPPGHQQEFAGRANSTPNPPWSFQRSKSLFCLPTGGPSLASSAEPQWFSNTGAPGHRASEWRHGHLLSIDDLEGAQETDVDTGLRLSSSDLSVVSAYSAPSRFCSTVETPLPSERCSSHWAAHKDSREGPLPTVSRVTTEASWASLPFFTKRSSSSSATARAAPPAPSTSTLTDSSPQLPCDTPKVKQTDGDMPPPPGSAGPGDNDMEEFYI.

Disordered regions lie at residues 1–37 (MDPK…SELS), 286–360 (FPKP…FQRS), and 488–546 (SSSS…EFYI). Over residues 24-36 (SDYSHLSSTSSEL) the composition is skewed to low complexity. Over residues 286–302 (FPKPGRVHHASEKKRHS) the composition is skewed to basic residues. Polar residues-rich tracts occupy residues 304-324 (PLPS…SPLN) and 347-360 (ANST…FQRS). Over residues 488–511 (SSSSATARAAPPAPSTSTLTDSSP) the composition is skewed to low complexity.

It belongs to the FAM124 family.

This Homo sapiens (Human) protein is Protein FAM124A (FAM124A).